A 113-amino-acid polypeptide reads, in one-letter code: Endoribonuclease SymE (113 aa).

A SpoVT-AbrB domain is found at 29–74; the sequence is SRYPDYSRIPAITLKGQWLEAAGFATGTAVVVKVMEGCIVLTAQPA.

Belongs to the SymE family.

It is found in the cytoplasm. In terms of biological role, involved in the degradation and recycling of damaged RNA. It is itself a target for degradation by the ATP-dependent protease Lon. This is Endoribonuclease SymE from Escherichia coli (strain ATCC 8739 / DSM 1576 / NBRC 3972 / NCIMB 8545 / WDCM 00012 / Crooks).